We begin with the raw amino-acid sequence, 993 residues long: Glycogen phosphorylase 2 (993 aa).

The disordered stretch occupies residues 1-82 (MEEKRSTNSP…SNQSEDPATQ (82 aa)). Over residues 19–48 (RSGSITSATSHPPRSNSNPKLVAKHQQQLY) the composition is skewed to polar residues. A compositionally biased stretch (low complexity) spans 58-77 (EQQNQQPQQQQQKQTSNQSE). N6-(pyridoxal phosphate)lysine is present on Lys-763. Residues 962–981 (VISGGDKTNNTLKPKQTTKG) are compositionally biased toward polar residues. A disordered region spans residues 962–993 (VISGGDKTNNTLKPKQTTKGFNIGGQPGNPTN). Gly residues predominate over residues 983–993 (NIGGQPGNPTN).

Belongs to the glycogen phosphorylase family. Homodimer. Pyridoxal 5'-phosphate serves as cofactor. The N-terminus is blocked. Post-translationally, enzyme activity requires processing of the 113 kDa peptide to an enzymatically active 106 kDa form of the protein. Processing would occur near the middle of the Gln-rich repetitive element.

It carries out the reaction [(1-&gt;4)-alpha-D-glucosyl](n) + phosphate = [(1-&gt;4)-alpha-D-glucosyl](n-1) + alpha-D-glucose 1-phosphate. In terms of biological role, phosphorylase is an important allosteric enzyme in carbohydrate metabolism. Enzymes from different sources differ in their regulatory mechanisms and in their natural substrates. However, all known phosphorylases share catalytic and structural properties. In Dictyostelium discoideum (Social amoeba), this protein is Glycogen phosphorylase 2 (glpD).